The sequence spans 153 residues: Small ribosomal subunit protein uS11 (153 aa).

This sequence belongs to the universal ribosomal protein uS11 family.

This is Small ribosomal subunit protein uS11 (RPS14) from Chlamydomonas reinhardtii (Chlamydomonas smithii).